The sequence spans 232 residues: Lipopolysaccharide core heptose(II) kinase WaaY (232 aa).

The protein belongs to the protein kinase superfamily. RfaY/WaaY family.

The enzyme catalyses alpha-D-Glc-(1-&gt;3)-[L-alpha-D-Hep-(1-&gt;7)]-L-alpha-D-Hep-(1-&gt;3)-4-O-PO3(2-)-L-alpha-D-Hep-(1-&gt;5)-[alpha-Kdo-(2-&gt;4)]-alpha-Kdo-(2-&gt;6)-lipid A + ATP = alpha-D-Glc-(1-&gt;3)-[L-alpha-D-Hep-(1-&gt;7)]-4-O-PO3(2-)-L-alpha-D-Hep-(1-&gt;3)-4-O-PO3(2-)-L-alpha-D-Hep-(1-&gt;5)-[alpha-Kdo-(2-&gt;4)]-alpha-Kdo-(2-&gt;6)-lipid A + ADP + H(+). The protein operates within bacterial outer membrane biogenesis; LPS core biosynthesis. Its function is as follows. Kinase involved in the biosynthesis of the core oligosaccharide region of lipopolysaccharide (LPS). Catalyzes the phosphorylation of the second heptose unit (HepII) of the inner core. The sequence is that of Lipopolysaccharide core heptose(II) kinase WaaY from Salmonella typhimurium (strain LT2 / SGSC1412 / ATCC 700720).